The primary structure comprises 529 residues: MSKHWTERIAEELSQQKKDEYIIGSGTSISGSVHIGNSCDIFIANAVSKELRKIGENAKTVWIADDYDPLRKVPYPLPENYSKYLGQPYYEIPCPEGCCENFVEHFQKPFVNSLKPFDIENLEIKSGAQMYKNGVYTEATKVALENTERIREIFNEYREHPLSEDWLPYNAICSECGRVNTTHAYDFEGTNIKYKCDCGHEGEVDYTTGMGKLTWRVEWAARWKILNITCEPFGKDHAASGGSYDVSKIISDEIFNYPAPYPVPYEWITLDGDAMSKSKGVFFSPEAWLKIGKPETLNYYIFRNKPLKPKDFTPKMGFLDLMDQYDRVERIAYGQEEASNEKEKEKLTKIYEVSQINDMPDEMPFQPSYRFLTVAYQIANGNANKIYTILKNNNQLPERLENVTFEDLSEFDRDTFLQRIEYVHNWLETYGPKFVKFQVMNKMPRIEITDEQKEFLKQIANILESETFENDVQFHDRMYEVLESLGMKPQKAFQAIYKTIIGKKQGPRAASFVLSLDKDFVIKRFRLEE.

The 'HIGH' region motif lies at 29–37 (ISGSVHIGN). A 'KMSKS' region motif is present at residues 274–278 (AMSKS). Lys277 provides a ligand contact to ATP.

Belongs to the class-I aminoacyl-tRNA synthetase family.

The protein resides in the cytoplasm. It catalyses the reaction tRNA(Lys) + L-lysine + ATP = L-lysyl-tRNA(Lys) + AMP + diphosphate. In Methanosphaera stadtmanae (strain ATCC 43021 / DSM 3091 / JCM 11832 / MCB-3), this protein is Lysine--tRNA ligase.